A 28-amino-acid chain; its full sequence is Short cationic peptide-1b (28 aa).

Position 28 is a glutamic acid 1-amide (glutamate 28).

Expressed by the venom gland.

It is found in the secreted. The chain is Short cationic peptide-1b from Cupiennius salei (American wandering spider).